Here is a 113-residue protein sequence, read N- to C-terminus: Cytochrome c55X (113 aa).

The signal sequence occupies residues 1–26; sequence MTVARHAVSRLGLALASFLLFPLALA. Heme c-binding residues include C45, C48, and H49.

In terms of processing, binds 1 heme c group covalently per subunit.

The protein resides in the periplasm. Its function is as follows. Monoheme c-type cytochrome. This Stutzerimonas stutzeri (Pseudomonas stutzeri) protein is Cytochrome c55X (nirC).